We begin with the raw amino-acid sequence, 209 residues long: NAD(P)H-quinone oxidoreductase subunit I (209 aa).

4Fe-4S ferredoxin-type domains follow at residues 55-84 and 95-124; these read GRIH…VDYE and NSYS…MTEE. The [4Fe-4S] cluster site is built by C64, C67, C70, C74, C104, C107, C110, and C114.

Belongs to the complex I 23 kDa subunit family. NDH-1 is composed of at least 11 different subunits. Requires [4Fe-4S] cluster as cofactor.

The protein localises to the cell inner membrane. It carries out the reaction a plastoquinone + NADH + (n+1) H(+)(in) = a plastoquinol + NAD(+) + n H(+)(out). It catalyses the reaction a plastoquinone + NADPH + (n+1) H(+)(in) = a plastoquinol + NADP(+) + n H(+)(out). Its function is as follows. NDH-1 shuttles electrons from an unknown electron donor, via FMN and iron-sulfur (Fe-S) centers, to quinones in the respiratory and/or the photosynthetic chain. The immediate electron acceptor for the enzyme in this species is believed to be plastoquinone. Couples the redox reaction to proton translocation, and thus conserves the redox energy in a proton gradient. This Gloeobacter violaceus (strain ATCC 29082 / PCC 7421) protein is NAD(P)H-quinone oxidoreductase subunit I.